A 638-amino-acid polypeptide reads, in one-letter code: Outer dense fiber protein 2 (638 aa).

Threonine 73 bears the Phosphothreonine mark. Serine 76 is subject to Phosphoserine; by TSSK4. A phosphoserine mark is found at serine 87 and serine 90. Position 91 is a phosphothreonine (threonine 91). Phosphoserine occurs at positions 96 and 110. Residue lysine 119 forms a Glycyl lysine isopeptide (Lys-Gly) (interchain with G-Cter in SUMO2) linkage. Serine 120 is subject to Phosphoserine. Residues 125-198 adopt a coiled-coil conformation; the sequence is QKGERQMAKR…MSKLVEAEMD (74 aa). Threonine 212 is subject to Phosphothreonine. 2 coiled-coil regions span residues 226-404 and 442-616; these read DINT…AEQL and EIIV…SDLR. Serine 242 bears the Phosphoserine mark. Residues 373–396 are disordered; sequence KQKGDRDKESLKKAIRAQKERAEK. Serine 613 bears the Phosphoserine mark.

This sequence belongs to the ODF2 family. As to quaternary structure, self-associates. Associates with microtubules and forms a fibrillar structure partially linked to the microtubule network. Interacts via its C-terminus with PLK1. Interacts with ODF1. Localized at the distal/subdistal appendages of mother centrioles. Interacts with MARK4; the interaction is required for localization of ODF2 to centrioles. Interacts with TSSK4. Interacts with AKNA. Interacts with QRICH2. Interacts with CFAP58. Interacts with BBOF1. Interacts with CCDC38. Interacts with CCDC42. Post-translationally, tyrosine phosphorylated. Phosphorylated on Ser-76 by TSSK4.

The protein resides in the cytoplasm. It is found in the cytoskeleton. Its subcellular location is the microtubule organizing center. The protein localises to the centrosome. It localises to the cell projection. The protein resides in the cilium. It is found in the centriole. Its subcellular location is the spindle pole. The protein localises to the flagellum. Functionally, seems to be a major component of sperm tail outer dense fibers (ODF). ODFs are filamentous structures located on the outside of the axoneme in the midpiece and principal piece of the mammalian sperm tail and may help to maintain the passive elastic structures and elastic recoil of the sperm tail. May have a modulating influence on sperm motility. Functions as a general scaffold protein that is specifically localized at the distal/subdistal appendages of mother centrioles. Component of the centrosome matrix required for the localization of PLK1 and NIN to the centrosomes. Required for the formation and/or maintenance of normal CETN1 assembly. The protein is Outer dense fiber protein 2 (ODF2) of Macaca fascicularis (Crab-eating macaque).